Consider the following 827-residue polypeptide: DNA gyrase subunit A (827 aa).

Residues 38–501 (LPDARDGLKP…SYENIDIEDL (464 aa)) enclose the Topo IIA-type catalytic domain. The active-site O-(5'-phospho-DNA)-tyrosine intermediate is the Tyr-126. The short motif at 528 to 534 (QNRGGKG) is the GyrA-box element.

The protein belongs to the type II topoisomerase GyrA/ParC subunit family. Heterotetramer, composed of two GyrA and two GyrB chains. In the heterotetramer, GyrA contains the active site tyrosine that forms a transient covalent intermediate with DNA, while GyrB binds cofactors and catalyzes ATP hydrolysis.

The protein localises to the cytoplasm. It carries out the reaction ATP-dependent breakage, passage and rejoining of double-stranded DNA.. A type II topoisomerase that negatively supercoils closed circular double-stranded (ds) DNA in an ATP-dependent manner to modulate DNA topology and maintain chromosomes in an underwound state. Negative supercoiling favors strand separation, and DNA replication, transcription, recombination and repair, all of which involve strand separation. Also able to catalyze the interconversion of other topological isomers of dsDNA rings, including catenanes and knotted rings. Type II topoisomerases break and join 2 DNA strands simultaneously in an ATP-dependent manner. The chain is DNA gyrase subunit A from Helicobacter pylori (strain ATCC 700392 / 26695) (Campylobacter pylori).